A 1316-amino-acid chain; its full sequence is DNA-directed RNA polymerase subunit beta' (1316 aa).

4 residues coordinate Zn(2+): C60, C62, C75, and C78. Residues D535, D537, and D539 each contribute to the Mg(2+) site. Residues C891, C968, C975, and C978 each coordinate Zn(2+).

The protein belongs to the RNA polymerase beta' chain family. The RNAP catalytic core consists of 2 alpha, 1 beta, 1 beta' and 1 omega subunit. When a sigma factor is associated with the core the holoenzyme is formed, which can initiate transcription. Mg(2+) is required as a cofactor. It depends on Zn(2+) as a cofactor.

It carries out the reaction RNA(n) + a ribonucleoside 5'-triphosphate = RNA(n+1) + diphosphate. In terms of biological role, DNA-dependent RNA polymerase catalyzes the transcription of DNA into RNA using the four ribonucleoside triphosphates as substrates. The protein is DNA-directed RNA polymerase subunit beta' of Mycobacterium bovis (strain BCG / Pasteur 1173P2).